Consider the following 492-residue polypeptide: NADH-quinone oxidoreductase subunit N (492 aa).

14 consecutive transmembrane segments (helical) span residues 18-38 (ILPM…NAFT), 45-65 (LNMF…LGLE), 80-100 (LSLV…FLAL), 108-128 (FQTA…QFMV), 133-153 (LLLM…LMAL), 167-187 (FTMG…FYLL), 209-229 (MLFA…VSLV), 250-270 (ISIV…GAFI), 277-297 (VEDI…LIAL), 305-325 (MLAY…FIHT), 333-353 (FVYW…LWLL), 381-401 (VAIL…FSVF), 415-435 (NHIL…FYYF), and 464-484 (MPIY…VFMM).

The protein belongs to the complex I subunit 2 family. As to quaternary structure, NDH-1 is composed of 14 different subunits. Subunits NuoA, H, J, K, L, M, N constitute the membrane sector of the complex.

The protein resides in the cell inner membrane. The enzyme catalyses a quinone + NADH + 5 H(+)(in) = a quinol + NAD(+) + 4 H(+)(out). Its function is as follows. NDH-1 shuttles electrons from NADH, via FMN and iron-sulfur (Fe-S) centers, to quinones in the respiratory chain. The immediate electron acceptor for the enzyme in this species is believed to be ubiquinone. Couples the redox reaction to proton translocation (for every two electrons transferred, four hydrogen ions are translocated across the cytoplasmic membrane), and thus conserves the redox energy in a proton gradient. The polypeptide is NADH-quinone oxidoreductase subunit N (Helicobacter acinonychis (strain Sheeba)).